Consider the following 348-residue polypeptide: NADH-ubiquinone oxidoreductase chain 2 (348 aa).

11 consecutive transmembrane segments (helical) span residues 3-23 (PYVL…TFAS), 25-45 (HWLL…RLMA), 60-80 (FLTQ…NAWA), 99-119 (MMAL…PEVL), 122-142 (LDLT…FALI), 150-170 (NPML…WGGL), 178-196 (ILAY…ILQY), 200-219 (LTLI…FLSL), 246-266 (LTLL…KWLI), 274-294 (DLPA…YFYL), and 328-348 (LMMI…ALFF).

It belongs to the complex I subunit 2 family.

It localises to the mitochondrion inner membrane. It catalyses the reaction a ubiquinone + NADH + 5 H(+)(in) = a ubiquinol + NAD(+) + 4 H(+)(out). In terms of biological role, core subunit of the mitochondrial membrane respiratory chain NADH dehydrogenase (Complex I) that is believed to belong to the minimal assembly required for catalysis. Complex I functions in the transfer of electrons from NADH to the respiratory chain. The immediate electron acceptor for the enzyme is believed to be ubiquinone. The protein is NADH-ubiquinone oxidoreductase chain 2 (MT-ND2) of Formosania lacustris (Oriental stream loach).